Consider the following 420-residue polypeptide: MSAFTDLETLAGDLKRSSAGVSDYHDRAVTPAQTFAAIRPHLRDFGITRVGLLTALDVLNIPVAFATRPNSHTLSVFQGKGIDNEAAMTSAAMEAVETRIAEIAPADLTQATVESMRAERAAMIDLDNVARCAPDEIGSRPIPWCSGLDILSGSSVFVPWWLVGLDHRGERPPGFEQSSDGLASGNTPSEAVLHGLCELVERDAWALTQLKSPERLKESRIDPASFGDAVIDVMTDRITRAGMKLLLLDMTTDIGIPAFLAVIMPGNLSDRVDARWSHVCGGCGCHPDPVRAALRAITEAAQSRLTAIAGSRDDFSPRIYQRLDRSAAMQQVVELCEGDGRMRPFQPRHHRKATIQETIGHIADRLVATGIEQIVVVPFPHPALPVSVVRVIVPGLEVDISGQYIQLGMRAVNTIRGAES.

The 342-residue stretch at 79–420 folds into the YcaO domain; the sequence is GKGIDNEAAM…AVNTIRGAES (342 aa).

This is an uncharacterized protein from Rhizobium leguminosarum bv. trifolii.